A 319-amino-acid polypeptide reads, in one-letter code: 1-aminocyclopropane-1-carboxylate oxidase 4 (319 aa).

Positions 153–253 constitute a Fe2OG dioxygenase domain; it reads PNFGTKVSNY…RMSLASFYNP (101 aa). Residues His177, Asp179, and His234 each coordinate Fe cation.

It belongs to the iron/ascorbate-dependent oxidoreductase family. Requires Fe cation as cofactor.

The catalysed reaction is 1-aminocyclopropane-1-carboxylate + L-ascorbate + O2 = ethene + L-dehydroascorbate + hydrogen cyanide + CO2 + 2 H2O. The protein operates within alkene biosynthesis; ethylene biosynthesis via S-adenosyl-L-methionine; ethylene from S-adenosyl-L-methionine: step 2/2. This chain is 1-aminocyclopropane-1-carboxylate oxidase 4 (ACO4), found in Petunia hybrida (Petunia).